We begin with the raw amino-acid sequence, 223 residues long: ATP phosphoribosyltransferase (223 aa).

This sequence belongs to the ATP phosphoribosyltransferase family. Short subfamily. As to quaternary structure, heteromultimer composed of HisG and HisZ subunits.

It localises to the cytoplasm. It carries out the reaction 1-(5-phospho-beta-D-ribosyl)-ATP + diphosphate = 5-phospho-alpha-D-ribose 1-diphosphate + ATP. It participates in amino-acid biosynthesis; L-histidine biosynthesis; L-histidine from 5-phospho-alpha-D-ribose 1-diphosphate: step 1/9. Functionally, catalyzes the condensation of ATP and 5-phosphoribose 1-diphosphate to form N'-(5'-phosphoribosyl)-ATP (PR-ATP). Has a crucial role in the pathway because the rate of histidine biosynthesis seems to be controlled primarily by regulation of HisG enzymatic activity. This chain is ATP phosphoribosyltransferase, found in Desulfitobacterium hafniense (strain Y51).